Here is a 937-residue protein sequence, read N- to C-terminus: C-1-tetrahydrofolate synthase, cytoplasmic (937 aa).

The methylenetetrahydrofolate dehydrogenase and cyclohydrolase stretch occupies residues 1–309; sequence MALLLEGTSL…TLLPLKLQTP (309 aa). Substrate is bound by residues 50 to 54 and 97 to 99; these read YVRMK and VQL. Residues 168–170 and Ser193 contribute to the NADP(+) site; that span reads GRS. 268-272 is a substrate binding site; sequence PGSVG. The interval 310–937 is formyltetrahydrofolate synthetase; it reads VPSDIEIARS…AENGDIVGLS (628 aa). ATP is bound at residue 374-381; sequence TPFGEGKS.

In the N-terminal section; belongs to the tetrahydrofolate dehydrogenase/cyclohydrolase family. It in the C-terminal section; belongs to the formate--tetrahydrofolate ligase family. Homodimer.

It is found in the cytoplasm. It catalyses the reaction (6R)-5,10-methylene-5,6,7,8-tetrahydrofolate + NADP(+) = (6R)-5,10-methenyltetrahydrofolate + NADPH. The catalysed reaction is (6R)-5,10-methenyltetrahydrofolate + H2O = (6R)-10-formyltetrahydrofolate + H(+). It carries out the reaction (6S)-5,6,7,8-tetrahydrofolate + formate + ATP = (6R)-10-formyltetrahydrofolate + ADP + phosphate. It participates in one-carbon metabolism; tetrahydrofolate interconversion. This is C-1-tetrahydrofolate synthase, cytoplasmic from Schizosaccharomyces pombe (strain 972 / ATCC 24843) (Fission yeast).